The chain runs to 142 residues: ATP synthase epsilon chain (142 aa).

It belongs to the ATPase epsilon chain family. As to quaternary structure, F-type ATPases have 2 components, CF(1) - the catalytic core - and CF(0) - the membrane proton channel. CF(1) has five subunits: alpha(3), beta(3), gamma(1), delta(1), epsilon(1). CF(0) has three main subunits: a, b and c.

It is found in the cell inner membrane. In terms of biological role, produces ATP from ADP in the presence of a proton gradient across the membrane. This Haemophilus influenzae (strain 86-028NP) protein is ATP synthase epsilon chain.